A 419-amino-acid chain; its full sequence is Ribosome biogenesis protein WDR12 homolog (419 aa).

Residues 10-91 (VQVHLKTKQE…EDSIEIEYVE (82 aa)) are ubiquitin-like (UBL) domain. 7 WD repeats span residues 103–140 (LHDD…KLTI), 142–184 (GHTA…NAVE), 191–230 (GHER…AGES), 249–287 (GHRE…IKTE), 289–328 (STNK…GSVV), 334–374 (GHNA…APLY), and 378–416 (GHGE…VENM).

Belongs to the WD repeat WDR12/YTM1 family.

Its subcellular location is the nucleus. The protein resides in the nucleolus. It is found in the nucleoplasm. Functionally, required for maturation of ribosomal RNAs and formation of the large ribosomal subunit. The protein is Ribosome biogenesis protein WDR12 homolog of Drosophila mojavensis (Fruit fly).